A 449-amino-acid polypeptide reads, in one-letter code: Ribulose bisphosphate carboxylase large chain (449 aa).

Residues Met1–Ser2 constitute a propeptide that is removed on maturation. Pro3 is subject to N-acetylproline. Lys14 is subject to N6,N6,N6-trimethyllysine. Positions 123 and 173 each coordinate substrate. Lys175 acts as the Proton acceptor in catalysis. Lys177 provides a ligand contact to substrate. Residues Lys201, Asp203, and Glu204 each coordinate Mg(2+). Lys201 carries the N6-carboxylysine modification. Residue His294 is the Proton acceptor of the active site. Positions 295, 327, and 379 each coordinate substrate.

This sequence belongs to the RuBisCO large chain family. Type I subfamily. As to quaternary structure, heterohexadecamer of 8 large chains and 8 small chains; disulfide-linked. The disulfide link is formed within the large subunit homodimers. Mg(2+) is required as a cofactor. The disulfide bond which can form in the large chain dimeric partners within the hexadecamer appears to be associated with oxidative stress and protein turnover.

The protein resides in the plastid. It is found in the chloroplast. The catalysed reaction is 2 (2R)-3-phosphoglycerate + 2 H(+) = D-ribulose 1,5-bisphosphate + CO2 + H2O. The enzyme catalyses D-ribulose 1,5-bisphosphate + O2 = 2-phosphoglycolate + (2R)-3-phosphoglycerate + 2 H(+). RuBisCO catalyzes two reactions: the carboxylation of D-ribulose 1,5-bisphosphate, the primary event in carbon dioxide fixation, as well as the oxidative fragmentation of the pentose substrate in the photorespiration process. Both reactions occur simultaneously and in competition at the same active site. The polypeptide is Ribulose bisphosphate carboxylase large chain (Salacia pallescens).